The chain runs to 444 residues: MKKYDRGWASLETGAALLIVMLLIAWGAGIWQDYIQTKGWQTEARLVSNWTSAARSYIGKNYTTLQGSSTTTTPAVITTTMLKNTGFLSSGFTETNSEGQRLQAYVVRNAQNPELLQAMVVSSGGTPYPVKALIQMAKDITTGLGGYIQDGKTATGALRSWSVALSNYGAKSGNGHIAVLLSTDELSGAAEDTDRLYRFQVNGRPDLNKMHTAIDMGSNNLNNVGAVNAQTGNFSGNVNGVNGTFSGQVKGNSGNFDVNVTAGGDIRSNNGWLITRNSKGWLNETHGGGFYMSDGSWVRSVNNKGIYTGGQVKGGTVRADGRLYTGEYLQLERTAVAGASCSPNGLVGRDNTGAILSCQSGTWRKVGSGELQIATAQATGWRFPGATATCPTGKRVTGGGGICTSRTGYIWLTRSFPSANNSWSAACDTTEDQNGSITVYAICQ.

The segment at 1 to 361 is constant region; sequence MKKYDRGWAS…TGAILSCQSG (361 aa). A variable region region spans residues 362-444; that stretch reads TWRKVGSGEL…GSITVYAICQ (83 aa).

The polypeptide is Shufflon protein B' (Escherichia coli).